Reading from the N-terminus, the 703-residue chain is Ion-translocating oxidoreductase complex subunit C (703 aa).

2 consecutive 4Fe-4S ferredoxin-type domains span residues 369–398 (YDPQ…QQMY) and 408–437 (KSNQ…IQYF). The [4Fe-4S] cluster site is built by Cys-378, Cys-381, Cys-384, Cys-388, Cys-417, Cys-420, Cys-423, and Cys-427. Disordered stretches follow at residues 467–542 (RLER…PDNS) and 555–680 (RQQT…PKKA). Residues 485-497 (ARREELAANKGED) are compositionally biased toward basic and acidic residues. The span at 559–577 (NGNSPVSSASNSDSATISA) shows a compositional bias: low complexity. Over residues 578–592 (DNTHSTPKTAQNQTA) the composition is skewed to polar residues. Composition is skewed to low complexity over residues 598–629 (AAVA…TEKT) and 641–669 (AAVA…EKTA).

It belongs to the 4Fe4S bacterial-type ferredoxin family. RnfC subfamily. As to quaternary structure, the complex is composed of six subunits: RnfA, RnfB, RnfC, RnfD, RnfE and RnfG. [4Fe-4S] cluster serves as cofactor.

It is found in the cell inner membrane. Functionally, part of a membrane-bound complex that couples electron transfer with translocation of ions across the membrane. This Actinobacillus succinogenes (strain ATCC 55618 / DSM 22257 / CCUG 43843 / 130Z) protein is Ion-translocating oxidoreductase complex subunit C.